We begin with the raw amino-acid sequence, 51 residues long: Sperm protamine P1 (51 aa).

It belongs to the protamine P1 family. In terms of assembly, cross-linked by interchain disulfide bonds around the DNA-helix. As to expression, testis.

It localises to the nucleus. The protein localises to the chromosome. Protamines substitute for histones in the chromatin of sperm during the haploid phase of spermatogenesis. They compact sperm DNA into a highly condensed, stable and inactive complex. This is Sperm protamine P1 (PRM1) from Pongo pygmaeus (Bornean orangutan).